A 478-amino-acid polypeptide reads, in one-letter code: MIRRLHDTNDLVRAFPRVHFVGIGGTGMSGIAEVMLTLGYEVSGSDNADNVATRRLASLGARIMRGHSAANVLGTDCVVVSSAIREDNPELMEARSQRIPIMPRAAMLAELMRFRRGIAVAGTHGKTTTTSLTAAVLSEGGLDPTFVIGGQLLAAGANAKLGGGQWLVAEADESDGSFLRLNPLMSIITNIDADHLENYGNDFARVQAAFAEFLQRLPFYGLAVLCIDDPEVAALAARTPRHVMSYGMSPQADVRAENVVQEGSRMRFTLRLPQGTSQEVVLALPGRHNVLNALAAAAVGWQLGVAPDAIARALEGFAGVGRRFNDLGEVTTASGAKVRIIDDYGHHPSELEAVFAAARGGWADKRLVVAFQPHRYSRTRDQFDKFAAVLSSVDALVLSEVYPAGEEPIAGADSHALARAIRARGRSEPVVVGKAAELASVLPDVLQDGDLLLMMGAGDIGAVATHIAVEGFKGEGEA.

Residue 122–128 (GTHGKTT) coordinates ATP.

The protein belongs to the MurCDEF family.

It is found in the cytoplasm. It catalyses the reaction UDP-N-acetyl-alpha-D-muramate + L-alanine + ATP = UDP-N-acetyl-alpha-D-muramoyl-L-alanine + ADP + phosphate + H(+). It participates in cell wall biogenesis; peptidoglycan biosynthesis. In terms of biological role, cell wall formation. The sequence is that of UDP-N-acetylmuramate--L-alanine ligase from Stenotrophomonas maltophilia (strain K279a).